The following is a 260-amino-acid chain: Proteasome subunit alpha type-1 (260 aa).

The disordered stretch occupies residues 231–260; it reads FLEGLEERPQRKPALPADEPAEKAEEPMEH. The segment covering 250–260 has biased composition (basic and acidic residues); the sequence is PAEKAEEPMEH.

It belongs to the peptidase T1A family. In terms of assembly, the 26S proteasome consists of a 20S proteasome core and two 19S regulatory subunits. The 20S proteasome core is a barrel-shaped complex made of 28 subunits that are arranged in four stacked rings. The two outer rings are each formed by seven alpha subunits, and the two inner rings are formed by seven beta subunits. The proteolytic activity is exerted by three beta-subunits PSMB5, PSMB6 and PSMB7.

It localises to the cytoplasm. The protein localises to the nucleus. In terms of biological role, component of the 20S core proteasome complex involved in the proteolytic degradation of most intracellular proteins. This complex plays numerous essential roles within the cell by associating with different regulatory particles. Associated with two 19S regulatory particles, forms the 26S proteasome and thus participates in the ATP-dependent degradation of ubiquitinated proteins. The 26S proteasome plays a key role in the maintenance of protein homeostasis by removing misfolded or damaged proteins that could impair cellular functions, and by removing proteins whose functions are no longer required. Associated with the PA200 or PA28, the 20S proteasome mediates ubiquitin-independent protein degradation. This type of proteolysis is required in several pathways including spermatogenesis (20S-PA200 complex) or generation of a subset of MHC class I-presented antigenic peptides (20S-PA28 complex). The sequence is that of Proteasome subunit alpha type-1 (PSMA1) from Gallus gallus (Chicken).